We begin with the raw amino-acid sequence, 137 residues long: Small ribosomal subunit protein uS12 (137 aa).

The interval 1 to 55 (MPTINQLVRKPRQSKIKKSDSPALNKGFNSKKKKFTDLNSPQKRGVCTRVGTMTP) is disordered. Aspartate 102 is modified (3-methylthioaspartic acid). The segment at 118–137 (SGVDGRRQGRSLYGTKKPKN) is disordered.

It belongs to the universal ribosomal protein uS12 family. Part of the 30S ribosomal subunit. Contacts proteins S8 and S17. May interact with IF1 in the 30S initiation complex.

In terms of biological role, with S4 and S5 plays an important role in translational accuracy. Interacts with and stabilizes bases of the 16S rRNA that are involved in tRNA selection in the A site and with the mRNA backbone. Located at the interface of the 30S and 50S subunits, it traverses the body of the 30S subunit contacting proteins on the other side and probably holding the rRNA structure together. The combined cluster of proteins S8, S12 and S17 appears to hold together the shoulder and platform of the 30S subunit. This chain is Small ribosomal subunit protein uS12, found in Staphylococcus aureus (strain Mu3 / ATCC 700698).